The chain runs to 484 residues: Aspartyl/glutamyl-tRNA(Asn/Gln) amidotransferase subunit B (484 aa).

The protein belongs to the GatB/GatE family. GatB subfamily. As to quaternary structure, heterotrimer of A, B and C subunits.

The enzyme catalyses L-glutamyl-tRNA(Gln) + L-glutamine + ATP + H2O = L-glutaminyl-tRNA(Gln) + L-glutamate + ADP + phosphate + H(+). It catalyses the reaction L-aspartyl-tRNA(Asn) + L-glutamine + ATP + H2O = L-asparaginyl-tRNA(Asn) + L-glutamate + ADP + phosphate + 2 H(+). In terms of biological role, allows the formation of correctly charged Asn-tRNA(Asn) or Gln-tRNA(Gln) through the transamidation of misacylated Asp-tRNA(Asn) or Glu-tRNA(Gln) in organisms which lack either or both of asparaginyl-tRNA or glutaminyl-tRNA synthetases. The reaction takes place in the presence of glutamine and ATP through an activated phospho-Asp-tRNA(Asn) or phospho-Glu-tRNA(Gln). The protein is Aspartyl/glutamyl-tRNA(Asn/Gln) amidotransferase subunit B of Anaeromyxobacter dehalogenans (strain 2CP-1 / ATCC BAA-258).